The primary structure comprises 182 residues: Glutathione-regulated potassium-efflux system ancillary protein KefG (182 aa).

The protein belongs to the NAD(P)H dehydrogenase (quinone) family. KefG subfamily. As to quaternary structure, interacts with KefB.

The protein resides in the cell inner membrane. It carries out the reaction a quinone + NADH + H(+) = a quinol + NAD(+). The catalysed reaction is a quinone + NADPH + H(+) = a quinol + NADP(+). Its function is as follows. Regulatory subunit of a potassium efflux system that confers protection against electrophiles. Required for full activity of KefB. The sequence is that of Glutathione-regulated potassium-efflux system ancillary protein KefG from Yersinia pestis bv. Antiqua (strain Nepal516).